Consider the following 147-residue polypeptide: Small ribosomal subunit protein uS12 (147 aa).

This sequence belongs to the universal ribosomal protein uS12 family. As to quaternary structure, part of the 30S ribosomal subunit.

Its function is as follows. With S4 and S5 plays an important role in translational accuracy. Located at the interface of the 30S and 50S subunits. This is Small ribosomal subunit protein uS12 from Methanococcus maripaludis (strain DSM 14266 / JCM 13030 / NBRC 101832 / S2 / LL).